Consider the following 444-residue polypeptide: IMP-specific 5'-nucleotidase 1 (444 aa).

ATP-binding residues include lysine 132 and histidine 150. The Nucleophile role is filled by aspartate 170. IMP contacts are provided by aspartate 170, aspartate 172, aspartate 178, threonine 204, serine 207, serine 308, aspartate 363, and lysine 371. Mg(2+) is bound by residues aspartate 170 and aspartate 172. Catalysis depends on aspartate 172, which acts as the Proton donor. Aspartate 394 provides a ligand contact to Mg(2+).

It belongs to the ISN1 family. Homotetramer. Mg(2+) is required as a cofactor.

The protein localises to the cytoplasm. It catalyses the reaction IMP + H2O = inosine + phosphate. With respect to regulation, at physiological pH, allosterically activated by ATP. ATP binding is a prerequisite to magnesium and substrate binding. ATP binds to 2 of the subunits in the homotetramer inducing a closure of these 2 subunits and the release of the C-terminal loop, thereby activating the enzyme. In this conformation, the enzyme can bind IMP and magnesium which ultimately leads to the release of ATP. At pH 5, ATP does not have an allosteric role and is dispensable for magnesium and substrate binding. Inhibited by phosphocholine and D-myo-inositol-4-phosphate. Functionally, specifically, catalyzes the dephosphorylation of inosine monophosphate (IMP) into inosine. By dephosphorylating IMP, plays a role in the purine salvage pathway. Does not have phosphotransferase activity with IMP as phosphate donor and adenosine as phosphate acceptor. The polypeptide is IMP-specific 5'-nucleotidase 1 (Plasmodium falciparum (isolate 3D7)).